Reading from the N-terminus, the 186-residue chain is Dynactin subunit 3 (186 aa).

N-acetylalanine is present on alanine 2. Residues 135–157 (QQQDQCVEITEESKALLEEYNKT) adopt a coiled-coil conformation.

The protein belongs to the dynactin subunit 3 family. Subunit of dynactin, a multiprotein complex part of a tripartite complex with dynein and a adapter, such as BICDL1, BICD2 or HOOK3. The dynactin complex is built around ACTR1A/ACTB filament and consists of an actin-related filament composed of a shoulder domain, a pointed end and a barbed end. Its length is defined by its flexible shoulder domain. The soulder is composed of 2 DCTN1 subunits, 4 DCTN2 and 2 DCTN3. The 4 DCNT2 (via N-terminus) bind the ACTR1A filament and act as molecular rulers to determine the length. The pointed end is important for binding dynein-dynactin cargo adapters. Consists of 4 subunits: ACTR10, DCNT4, DCTN5 and DCTN6. The barbed end is composed of a CAPZA1:CAPZB heterodimers, which binds ACTR1A/ACTB filament and dynactin and stabilizes dynactin.

It is found in the cytoplasm. The protein localises to the cytoskeleton. It localises to the microtubule organizing center. The protein resides in the centrosome. Its subcellular location is the chromosome. It is found in the centromere. The protein localises to the kinetochore. It localises to the spindle. The protein resides in the cleavage furrow. Its subcellular location is the midbody. Functionally, part of the dynactin complex that activates the molecular motor dynein for ultra-processive transport along microtubules. Together with dynein may be involved in spindle assembly and cytokinesis. The protein is Dynactin subunit 3 (DCTN3) of Bos taurus (Bovine).